The following is a 914-amino-acid chain: Probable UDP-N-acetylglucosamine--peptide N-acetylglucosaminyltransferase SPINDLY (914 aa).

The interval 1 to 39 (MVGLEDDTERERSPVVENGFSNGSRSSSSSAGVLSPSRK) is disordered. Positions 19 to 37 (GFSNGSRSSSSSAGVLSPS) are enriched in low complexity. Ser-35 is modified (phosphoserine). TPR repeat units follow at residues 43–76 (GNDT…DSKN), 77–110 (VEAH…DPHN), 112–144 (CALT…DASY), 152–185 (AIVL…DPHY), 186–219 (APAY…RPMY), 220–253 (AEAY…SPNF), 261–294 (AIAL…NWHY), 295–328 (ADAM…NPHC), 329–362 (AEAC…KPNF), 364–396 (QSLN…NPTY), and 397–430 (AEAF…DPDS). Residues 431-914 (RNAGQNRLLA…QLSKRMDSTS (484 aa)) are catalytic region. The segment at 866 to 914 (PLISKDLGPSRVSVTGEATPSLKANGSAPVPSSLPTQSPQLSKRMDSTS) is disordered. Polar residues predominate over residues 877 to 889 (VSVTGEATPSLKA). Residues 894–907 (PVPSSLPTQSPQLS) are compositionally biased toward low complexity.

Belongs to the glycosyltransferase 41 family. O-GlcNAc transferase subfamily. Homomultimer; via its TPR repeats. Interacts with GI. Interacts with TCP14 and TCP15. Interacts (via N-terminus) with APRR5. Interacts with CPN20. Widely expressed. Present throughout the plant (at protein level).

Its subcellular location is the cytoplasm. It is found in the nucleus. The enzyme catalyses L-seryl-[protein] + UDP-N-acetyl-alpha-D-glucosamine = 3-O-(N-acetyl-beta-D-glucosaminyl)-L-seryl-[protein] + UDP + H(+). The catalysed reaction is L-threonyl-[protein] + UDP-N-acetyl-alpha-D-glucosamine = 3-O-(N-acetyl-beta-D-glucosaminyl)-L-threonyl-[protein] + UDP + H(+). It catalyses the reaction L-seryl-[protein] + GDP-beta-L-fucose = 3-O-(alpha-L-fucosyl)-L-seryl-[protein] + GDP + H(+). It carries out the reaction L-threonyl-[protein] + GDP-beta-L-fucose = 3-O-(alpha-L-fucosyl)-L-threonyl-[protein] + GDP + H(+). Its pathway is protein modification; protein glycosylation. Functionally, probable O-linked N-acetylglucosamine transferase (OGT) involved in various processes such as gibberellin (GA) signaling pathway and circadian clock. OGTs catalyze the addition of nucleotide-activated sugars directly onto the polypeptide through O-glycosidic linkage with the hydroxyl of serine or threonine. Probably acts by adding O-linked sugars to yet unknown proteins. Acts as a repressor of GA signaling pathway to inhibit hypocotyl elongation. Functions with GIGANTEA (GI) in pathways controlling flowering, circadian cotyledon movements and hypocotyl elongation. Acts as a light-regulated promoter of elongation via its interaction with GI. Acts as an activator of cytokinin signaling. Required with SEC for gamete and seed development. Its OGT activity has been proved in vitro but not in vivo. Possesses O-fucosyltransferase activity on specific serine and threonine residues. Mediates O-fucosylation of the DELLA protein RGA, a repressor of the GA signaling pathway. O-fucosylation enhances RGA activity by promoting RGA binding to key transcription factors in brassinosteroid and light-signaling pathways. Regulates root hair patterning upstream of the transcription factor WER, independently of DELLA proteins and GA signaling. Involved in abscisic acid (ABA) signaling partly through functional ABAR. Mediates O-fucosylation of CPN20 that may depress ABA responses during seed germination and seedling development. Involved in the modulation of the pace of the circadian clock by mediating O-fucosylation of APRR5, one of the core circadian clock components. O-fucosylation promotes APRR5 proteolysis. This is Probable UDP-N-acetylglucosamine--peptide N-acetylglucosaminyltransferase SPINDLY from Arabidopsis thaliana (Mouse-ear cress).